Reading from the N-terminus, the 590-residue chain is Aspartate--tRNA(Asp/Asn) ligase (590 aa).

Glu-170 lines the L-aspartate pocket. Residues 194-197 (QLFK) form an aspartate region. Arg-216 serves as a coordination point for L-aspartate. Residues 216–218 (RDE) and Gln-225 each bind ATP. Residue His-448 participates in L-aspartate binding. Glu-482 provides a ligand contact to ATP. Residue Arg-489 coordinates L-aspartate. 534 to 537 (GWDR) serves as a coordination point for ATP. The interval 557–590 (SGGGADPLTGAPAPITPQQRRESGIDAKPKKDGE) is disordered. The span at 575-590 (QRRESGIDAKPKKDGE) shows a compositional bias: basic and acidic residues.

The protein belongs to the class-II aminoacyl-tRNA synthetase family. Type 1 subfamily. In terms of assembly, homodimer.

It is found in the cytoplasm. The enzyme catalyses tRNA(Asx) + L-aspartate + ATP = L-aspartyl-tRNA(Asx) + AMP + diphosphate. Functionally, aspartyl-tRNA synthetase with relaxed tRNA specificity since it is able to aspartylate not only its cognate tRNA(Asp) but also tRNA(Asn). Reaction proceeds in two steps: L-aspartate is first activated by ATP to form Asp-AMP and then transferred to the acceptor end of tRNA(Asp/Asn). This Mycobacterium sp. (strain JLS) protein is Aspartate--tRNA(Asp/Asn) ligase.